A 79-amino-acid polypeptide reads, in one-letter code: MARIGVENSLTDVQQALQQQGHEVVTLNSEQDAQGCDCCIVTGQDSNVMGIADASIKGSVITAHGLTTDEICQQVEIRT.

This sequence belongs to the UPF0180 family.

The chain is UPF0180 protein BCG9842_B3897 from Bacillus cereus (strain G9842).